We begin with the raw amino-acid sequence, 444 residues long: Acyl-CoA 6-desaturase (444 aa).

Topologically, residues Met1–Asp122 are cytoplasmic. A Cytochrome b5 heme-binding domain is found at Met18–Ala95. The helical transmembrane segment at Met123–Met143 threads the bilayer. The Lumenal segment spans residues Glu144–Ala147. The chain crosses the membrane as a helical span at residues Trp148–Leu168. Topologically, residues Ala169–Glu264 are cytoplasmic. Residues His180–His184 carry the Histidine box-1 motif. The short motif at His217 to His221 is the Histidine box-2 element. Residues Tyr265 to Met285 form a helical membrane-spanning segment. The Lumenal segment spans residues Thr286 to Arg305. A helical membrane pass occupies residues Phe306–Ile326. At Arg327–Lys444 the chain is on the cytoplasmic side. The Histidine box-3 motif lies at Gln382–His386.

It belongs to the fatty acid desaturase type 1 family.

The protein resides in the endoplasmic reticulum membrane. The enzyme catalyses (9Z,12Z)-octadecadienoyl-CoA + 2 Fe(II)-[cytochrome b5] + O2 + 2 H(+) = (6Z,9Z,12Z)-octadecatrienoyl-CoA + 2 Fe(III)-[cytochrome b5] + 2 H2O. The catalysed reaction is (9Z,12Z,15Z)-octadecatrienoyl-CoA + 2 Fe(II)-[cytochrome b5] + O2 + 2 H(+) = (6Z,9Z,12Z,15Z)-octadecatetraenoyl-CoA + 2 Fe(III)-[cytochrome b5] + 2 H2O. It carries out the reaction (9Z,12Z,15Z,18Z,21Z)-tetracosapentaenoyl-CoA + 2 Fe(II)-[cytochrome b5] + O2 + 2 H(+) = (6Z,9Z,12Z,15Z,18Z,21Z)-tetracosahexaenoyl-CoA + 2 Fe(III)-[cytochrome b5] + 2 H2O. It catalyses the reaction (11E)-octadecenoyl-CoA + 2 Fe(II)-[cytochrome b5] + O2 + 2 H(+) = (6Z,11E)-octadecadienoyl-CoA + 2 Fe(III)-[cytochrome b5] + 2 H2O. The enzyme catalyses (11Z,14Z)-eicosadienoyl-CoA + 2 Fe(II)-[cytochrome b5] + O2 + 2 H(+) = (8Z,11Z,14Z)-eicosatrienoyl-CoA + 2 Fe(III)-[cytochrome b5] + 2 H2O. The catalysed reaction is (11Z,14Z,17Z)-eicosatrienoyl-CoA + 2 Fe(II)-[cytochrome b5] + O2 + 2 H(+) = (8Z,11Z,14Z,17Z)-eicosatetraenoyl-CoA + 2 Fe(III)-[cytochrome b5] + 2 H2O. The protein operates within lipid metabolism; polyunsaturated fatty acid biosynthesis. Its function is as follows. Involved in the biosynthesis of highly unsaturated fatty acids (HUFA) from the essential polyunsaturated fatty acids (PUFA) linoleic acid (LA) (18:2n-6) and alpha-linolenic acid (ALA) (18:3n-3) precursors, acting as a fatty acyl-coenzyme A (CoA) desaturase that introduces a cis double bond at carbon 6 of the fatty acyl chain. Catalyzes the first and rate limiting step in this pathway which is the desaturation of LA (18:2n-6) and ALA (18:3n-3) into gamma-linoleate (GLA) (18:3n-6) and stearidonate (18:4n-3), respectively. Subsequently, in the biosynthetic pathway of HUFA n-3 series, it desaturates tetracosapentaenoate (24:5n-3) to tetracosahexaenoate (24:6n-3), which is then converted to docosahexaenoate (DHA)(22:6n-3), an important lipid for nervous system function. It can also desaturate (11E)-octadecenoate (trans-vaccenoate, a metabolite in the biohydrogenation pathway of LA and the predominant trans fatty acid in cow milk) at carbon 6 generating (6Z,11E)-octadecadienoate. In addition to Delta-6 activity, this enzyme exhibits Delta-8 activity with slight biases toward n-3 fatty acyl-CoA substrates. This chain is Acyl-CoA 6-desaturase (FADS2), found in Bos taurus (Bovine).